We begin with the raw amino-acid sequence, 1057 residues long: mRNA export factor elf1 (1057 aa).

ABC transporter domains are found at residues 440–659 and 692–1019; these read IEEE…VKPE and LKMT…KKKL. ATP contacts are provided by residues 477-484 and 726-733; these read GHNGCGKS and GPNGAGKS. S733 carries the post-translational modification Phosphoserine. The Chromo domain occupies 820–869; that stretch reads RRVEALIGRQKLKKSFQYEIKWFGKPHKYNTWVSREILLENGFQKFVQAF. The segment covering 1020–1036 has biased composition (basic and acidic residues); it reads TRNEIKAKERRAREREL. A disordered region spans residues 1020-1057; sequence TRNEIKAKERRARERELAWLQSPKGTEKPKSFFSDDEE. Residues S1041 and S1053 each carry the phosphoserine modification.

Belongs to the ABC transporter superfamily. ABCF family. EF3 subfamily.

It is found in the cytoplasm. The protein resides in the nucleus. In terms of biological role, has a direct role in the mRNA export process. Appears to act within the rae1 mediated mRNA export pathway. This is mRNA export factor elf1 (elf1) from Schizosaccharomyces pombe (strain 972 / ATCC 24843) (Fission yeast).